A 299-amino-acid chain; its full sequence is Probable lipid kinase YegS (299 aa).

Residues 2–133 (AEFPASLLIL…IDMAQVNKQT (132 aa)) form the DAGKc domain. ATP-binding positions include threonine 40, 66 to 72 (GDGTINE), and threonine 95. Residues leucine 215, aspartate 218, and leucine 220 each contribute to the Mg(2+) site. The active-site Proton acceptor is glutamate 271.

It belongs to the diacylglycerol/lipid kinase family. YegS lipid kinase subfamily. Requires Mg(2+) as cofactor. It depends on Ca(2+) as a cofactor.

It localises to the cytoplasm. Probably phosphorylates lipids; the in vivo substrate is unknown. In Shigella boydii serotype 18 (strain CDC 3083-94 / BS512), this protein is Probable lipid kinase YegS.